The sequence spans 1238 residues: Virulence sensor protein BvgS (1238 aa).

The first 32 residues, 1 to 32, serve as a signal peptide directing secretion; sequence MPAPHRLYPRSLICLAQALLAWALLAWAPAQA. Residues 33-307 lie on the Cytoplasmic side of the membrane; that stretch reads SQELTLVGKA…REQQWMADHP (275 aa). A helical transmembrane segment spans residues 308–331; it reads VVKVAVLNLFAPFTLFRTDEQFGG. Topologically, residues 332 to 541 are periplasmic; that stretch reads ISAAVLQLLQ…PRTWYAYRNE (210 aa). The chain crosses the membrane as a helical span at residues 542 to 563; the sequence is IYLLIGLGLLSALLFLSWIVYL. Residues 564-1238 are Cytoplasmic-facing; the sequence is RRQIRQRKRA…LEQRPHQDQP (675 aa). The PAS domain maps to 580 to 651; the sequence is QLEFMRVLID…MHEFLLTRVA (72 aa). Positions 652 to 708 constitute a PAC domain; the sequence is AEREPRFEDRDVTLHGRTRHVYQWTIPYGDSLGELKGIIGGWIDITERAELLRKLHD. In terms of domain architecture, Histidine kinase spans 726–948; sequence TMSHEIRTPM…TVSVDLRLTM (223 aa). His729 carries the phosphohistidine; by autocatalysis modification. Positions 974 to 1095 constitute a Response regulatory domain; it reads RVLVVDDHKP…ALRQRLNEAV (122 aa). Position 1023 is a 4-aspartylphosphate (Asp1023). The HPt domain occupies 1133-1228; the sequence is DEALIRQLLE…AALETQLRAW (96 aa). His1172 carries the phosphohistidine modification.

In terms of processing, activation requires a sequential transfer of a phosphate group from a His in the primary transmitter domain, to an Asp in the receiver domain and to a His in the secondary transmitter domain.

The protein resides in the cell inner membrane. It catalyses the reaction ATP + protein L-histidine = ADP + protein N-phospho-L-histidine.. Its function is as follows. Member of the two-component regulatory system BvgS/BvgA. Phosphorylates BvgA via a four-step phosphorelay in response to environmental signals. The chain is Virulence sensor protein BvgS (bvgS) from Bordetella pertussis (strain Tohama I / ATCC BAA-589 / NCTC 13251).